The primary structure comprises 413 residues: uncharacterized protein (413 aa).

4 helical membrane passes run 22-42 (VLLVSILSKIGISISIFTLIL), 270-290 (IIYVTLFLIIIISCFSVISIC), 312-332 (ILIQLIFFYYGMRFIIIGNLI), and 379-399 (LIIIFISTLTIGIVANWYPIY).

The protein belongs to the ABC-4 integral membrane protein family. LolC/E subfamily.

Its subcellular location is the cell membrane. This is an uncharacterized protein from Buchnera aphidicola subsp. Schizaphis graminum (strain Sg).